The primary structure comprises 152 residues: UPF0266 membrane protein YobD (152 aa).

A run of 3 helical transmembrane segments spans residues leucine 6–methionine 26, isoleucine 45–histidine 65, and alanine 67–isoleucine 87.

Belongs to the UPF0266 family.

The protein localises to the cell inner membrane. This is UPF0266 membrane protein YobD from Escherichia fergusonii (strain ATCC 35469 / DSM 13698 / CCUG 18766 / IAM 14443 / JCM 21226 / LMG 7866 / NBRC 102419 / NCTC 12128 / CDC 0568-73).